Here is a 309-residue protein sequence, read N- to C-terminus: 5-oxoprolinase subunit C (309 aa).

It belongs to the PxpC family. In terms of assembly, forms a complex composed of PxpA, PxpB and PxpC.

The enzyme catalyses 5-oxo-L-proline + ATP + 2 H2O = L-glutamate + ADP + phosphate + H(+). Functionally, catalyzes the cleavage of 5-oxoproline to form L-glutamate coupled to the hydrolysis of ATP to ADP and inorganic phosphate. The sequence is that of 5-oxoprolinase subunit C from Haemophilus influenzae (strain ATCC 51907 / DSM 11121 / KW20 / Rd).